A 340-amino-acid chain; its full sequence is UDP-N-acetylglucosamine--N-acetylmuramyl-(pentapeptide) pyrophosphoryl-undecaprenol N-acetylglucosamine transferase (340 aa).

UDP-N-acetyl-alpha-D-glucosamine contacts are provided by residues 10–12 (TGG), Asn-124, Ser-179, and Gln-277.

This sequence belongs to the glycosyltransferase 28 family. MurG subfamily.

The protein localises to the cell inner membrane. It catalyses the reaction di-trans,octa-cis-undecaprenyl diphospho-N-acetyl-alpha-D-muramoyl-L-alanyl-D-glutamyl-meso-2,6-diaminopimeloyl-D-alanyl-D-alanine + UDP-N-acetyl-alpha-D-glucosamine = di-trans,octa-cis-undecaprenyl diphospho-[N-acetyl-alpha-D-glucosaminyl-(1-&gt;4)]-N-acetyl-alpha-D-muramoyl-L-alanyl-D-glutamyl-meso-2,6-diaminopimeloyl-D-alanyl-D-alanine + UDP + H(+). It participates in cell wall biogenesis; peptidoglycan biosynthesis. In terms of biological role, cell wall formation. Catalyzes the transfer of a GlcNAc subunit on undecaprenyl-pyrophosphoryl-MurNAc-pentapeptide (lipid intermediate I) to form undecaprenyl-pyrophosphoryl-MurNAc-(pentapeptide)GlcNAc (lipid intermediate II). The polypeptide is UDP-N-acetylglucosamine--N-acetylmuramyl-(pentapeptide) pyrophosphoryl-undecaprenol N-acetylglucosamine transferase (Sulfurimonas denitrificans (strain ATCC 33889 / DSM 1251) (Thiomicrospira denitrificans (strain ATCC 33889 / DSM 1251))).